Consider the following 253-residue polypeptide: Regulatory protein VirG (253 aa).

In terms of domain architecture, Response regulatory spans 15–129 (HVLVIDDDVA…EFLARIRVAL (115 aa)). At aspartate 64 the chain carries 4-aspartylphosphate. Positions 141–241 (RRSFSFADWT…ARGAGYFFDA (101 aa)) form a DNA-binding region, ompR/PhoB-type.

In terms of processing, phosphorylated by wide host range (WHR) VirA protein.

Its subcellular location is the cytoplasm. VirG is required for the positive regulation of at least two vir loci encoded by the Ti plasmid of A.tumefaciens. In Agrobacterium fabrum (strain C58 / ATCC 33970) (Agrobacterium tumefaciens (strain C58)), this protein is Regulatory protein VirG (virG).